A 505-amino-acid polypeptide reads, in one-letter code: L-carnitine/gamma-butyrobetaine antiporter (505 aa).

The next 12 helical transmembrane spans lie at 10 to 30, 51 to 71, 92 to 112, 143 to 163, 195 to 215, 231 to 251, 263 to 283, 316 to 336, 347 to 367, 403 to 423, 446 to 466, and 475 to 495; these read IEPK…WLTV, WGWA…WLVF, IFMM…SIEI, GPLP…FFFV, FYLV…TPLV, LDAI…ACGL, SYLS…SFIM, WTVF…IFLA, LCFG…TVLG, LSTA…VTLI, LLVR…LLAL, and AIIA…LSFI.

It belongs to the BCCT transporter (TC 2.A.15) family. CaiT subfamily. Homotrimer.

The protein resides in the cell inner membrane. It carries out the reaction 4-(trimethylamino)butanoate(in) + (R)-carnitine(out) = 4-(trimethylamino)butanoate(out) + (R)-carnitine(in). The protein operates within amine and polyamine metabolism; carnitine metabolism. Functionally, catalyzes the exchange of L-carnitine for gamma-butyrobetaine. This is L-carnitine/gamma-butyrobetaine antiporter from Salmonella agona (strain SL483).